The primary structure comprises 550 residues: Hydroxylamine reductase (550 aa).

[2Fe-2S] cluster contacts are provided by C3, C6, C18, and C25. 8 residues coordinate hybrid [4Fe-2O-2S] cluster: H249, E273, C317, C405, C433, C458, E492, and K494. A Cysteine persulfide modification is found at C405.

This sequence belongs to the HCP family. The cofactor is [2Fe-2S] cluster. It depends on hybrid [4Fe-2O-2S] cluster as a cofactor.

It is found in the cytoplasm. The catalysed reaction is A + NH4(+) + H2O = hydroxylamine + AH2 + H(+). Its function is as follows. Catalyzes the reduction of hydroxylamine to form NH(3) and H(2)O. The polypeptide is Hydroxylamine reductase (Escherichia coli (strain SE11)).